A 150-amino-acid polypeptide reads, in one-letter code: UPF0178 protein Rru_A0086 (150 aa).

This sequence belongs to the UPF0178 family.

The protein is UPF0178 protein Rru_A0086 of Rhodospirillum rubrum (strain ATCC 11170 / ATH 1.1.1 / DSM 467 / LMG 4362 / NCIMB 8255 / S1).